The primary structure comprises 441 residues: Xylose isomerase (441 aa).

Active-site residues include His-105 and Asp-108. Residues Glu-236, Glu-272, His-275, Asp-300, Asp-311, Asp-313, and Asp-343 each coordinate Mg(2+).

This sequence belongs to the xylose isomerase family. In terms of assembly, homotetramer. Mg(2+) serves as cofactor.

It localises to the cytoplasm. It carries out the reaction alpha-D-xylose = alpha-D-xylulofuranose. This is Xylose isomerase from Mesorhizobium japonicum (strain LMG 29417 / CECT 9101 / MAFF 303099) (Mesorhizobium loti (strain MAFF 303099)).